A 302-amino-acid polypeptide reads, in one-letter code: 33 kDa chaperonin (302 aa).

Disulfide bonds link cysteine 234–cysteine 236 and cysteine 267–cysteine 270.

The protein belongs to the HSP33 family. In terms of processing, under oxidizing conditions two disulfide bonds are formed involving the reactive cysteines. Under reducing conditions zinc is bound to the reactive cysteines and the protein is inactive.

The protein localises to the cytoplasm. Its function is as follows. Redox regulated molecular chaperone. Protects both thermally unfolding and oxidatively damaged proteins from irreversible aggregation. Plays an important role in the bacterial defense system toward oxidative stress. The sequence is that of 33 kDa chaperonin from Neisseria meningitidis serogroup A / serotype 4A (strain DSM 15465 / Z2491).